We begin with the raw amino-acid sequence, 150 residues long: MATILVLHGPNLNLLGTREPGVYGTITLPQINQDLEQRARDAGHHLMYLQSNAEYELIDRIHAARGEGVDFILINPAAFTHTSVAIRDALMGVSIPFIEVHLSNVHKREPFRHHSYFSDVAVGVICGLGASGYRLALEAALEQLAASAKP.

Catalysis depends on Tyr-23, which acts as the Proton acceptor. Residues Asn-75, His-81, and Asp-88 each contribute to the substrate site. The active-site Proton donor is His-101. Residues 102 to 103 and Arg-112 each bind substrate; that span reads LS.

It belongs to the type-II 3-dehydroquinase family. As to quaternary structure, homododecamer.

The enzyme catalyses 3-dehydroquinate = 3-dehydroshikimate + H2O. It functions in the pathway metabolic intermediate biosynthesis; chorismate biosynthesis; chorismate from D-erythrose 4-phosphate and phosphoenolpyruvate: step 3/7. Catalyzes a trans-dehydration via an enolate intermediate. The sequence is that of 3-dehydroquinate dehydratase from Pseudomonas savastanoi pv. phaseolicola (strain 1448A / Race 6) (Pseudomonas syringae pv. phaseolicola (strain 1448A / Race 6)).